The chain runs to 413 residues: Short-chain specific acyl-CoA dehydrogenase, mitochondrial (413 aa).

The N-terminal 24 residues, 1–24 (MAAALLARACGPVRGALWPRDCRR), are a transit peptide targeting the mitochondrion. The residue at position 27 (T27) is a Phosphothreonine. K51 bears the N6-acetyllysine; alternate mark. K51 carries the N6-succinyllysine; alternate modification. K72 carries the N6-acetyllysine modification. N6-acetyllysine; alternate is present on K129. N6-succinyllysine; alternate is present on K129. FAD is bound by residues 152-161 (FALSEPGNGS) and 185-187 (WIT). S161 lines the substrate pocket. K208 is modified (N6-acetyllysine). K262 is modified (N6-acetyllysine; alternate). The residue at position 262 (K262) is an N6-succinyllysine; alternate. Residue 269–272 (DMGR) participates in substrate binding. Residue R297 coordinates FAD. An N6-acetyllysine; alternate modification is found at K306. K306 carries the N6-succinyllysine; alternate modification. Residues Q308 and 366-370 (QILGG) contribute to the FAD site. Catalysis depends on E393, which acts as the Proton acceptor. Residue G394 participates in substrate binding. 395-397 (TSE) contributes to the FAD binding site.

It belongs to the acyl-CoA dehydrogenase family. In terms of assembly, homotetramer. FAD serves as cofactor.

The protein resides in the mitochondrion matrix. The catalysed reaction is a short-chain 2,3-saturated fatty acyl-CoA + oxidized [electron-transfer flavoprotein] + H(+) = a short-chain (2E)-enoyl-CoA + reduced [electron-transfer flavoprotein]. It carries out the reaction butanoyl-CoA + oxidized [electron-transfer flavoprotein] + H(+) = (2E)-butenoyl-CoA + reduced [electron-transfer flavoprotein]. It catalyses the reaction pentanoyl-CoA + oxidized [electron-transfer flavoprotein] + H(+) = (2E)-pentenoyl-CoA + reduced [electron-transfer flavoprotein]. The enzyme catalyses hexanoyl-CoA + oxidized [electron-transfer flavoprotein] + H(+) = (2E)-hexenoyl-CoA + reduced [electron-transfer flavoprotein]. Its pathway is lipid metabolism; mitochondrial fatty acid beta-oxidation. In terms of biological role, short-chain specific acyl-CoA dehydrogenase is one of the acyl-CoA dehydrogenases that catalyze the first step of mitochondrial fatty acid beta-oxidation, an aerobic process breaking down fatty acids into acetyl-CoA and allowing the production of energy from fats. The first step of fatty acid beta-oxidation consists in the removal of one hydrogen from C-2 and C-3 of the straight-chain fatty acyl-CoA thioester, resulting in the formation of trans-2-enoyl-CoA. Among the different mitochondrial acyl-CoA dehydrogenases, short-chain specific acyl-CoA dehydrogenase acts specifically on acyl-CoAs with saturated 4 to 6 carbons long primary chains. In Sus scrofa (Pig), this protein is Short-chain specific acyl-CoA dehydrogenase, mitochondrial (ACADS).